The chain runs to 523 residues: Alpha,alpha-trehalose-phosphate synthase [UDP-forming] (523 aa).

D-glucose 6-phosphate contacts are provided by Tyr98 and Asp152. UDP-binding residues include Arg288 and Lys293. UDP-alpha-D-glucose is bound by residues Arg288 and Lys293. Residue Arg326 coordinates D-glucose 6-phosphate. 387–395 contacts UDP-alpha-D-glucose; sequence DGMNLVSYE. Residue 391–395 coordinates UDP; it reads LVSYE. The tract at residues 503–523 is disordered; that stretch reads QQFNLGEQREEGRLEPGEFDD. Basic and acidic residues predominate over residues 509 to 523; it reads EQREEGRLEPGEFDD.

It belongs to the glycosyltransferase 20 family.

It carries out the reaction D-glucose 6-phosphate + UDP-alpha-D-glucose = alpha,alpha-trehalose 6-phosphate + UDP + H(+). It functions in the pathway carbohydrate biosynthesis. Functionally, synthase catalytic subunit of the trehalose synthase complex that catalyzes the production of trehalose from glucose-6-phosphate and UDP-alpha-D-glucose in a two step process. The disaccharide trehalose serves as a storage carbohydrate that is mobilized during conidial germination. Trehalose also serves as a protectant for cell integrity during stress. The polypeptide is Alpha,alpha-trehalose-phosphate synthase [UDP-forming] (Botryotinia fuckeliana (strain B05.10) (Noble rot fungus)).